The primary structure comprises 940 residues: Protein translocase subunit SecA 1 (940 aa).

ATP contacts are provided by residues Q83, 101-105 (GEGKT), and D490. The disordered stretch occupies residues 856 to 940 (AEQGGTATAA…AKPPKSVKRR (85 aa)).

This sequence belongs to the SecA family. In terms of assembly, monomer and homodimer. Part of the essential Sec protein translocation apparatus which comprises SecA, SecYEG and auxiliary proteins SecDF. Other proteins may also be involved.

The protein localises to the cell membrane. It localises to the cytoplasm. It catalyses the reaction ATP + H2O + cellular proteinSide 1 = ADP + phosphate + cellular proteinSide 2.. Functionally, part of the Sec protein translocase complex. Interacts with the SecYEG preprotein conducting channel. Has a central role in coupling the hydrolysis of ATP to the transfer of proteins into and across the cell membrane, serving as an ATP-driven molecular motor driving the stepwise translocation of polypeptide chains across the membrane. The chain is Protein translocase subunit SecA 1 from Mycolicibacterium paratuberculosis (strain ATCC BAA-968 / K-10) (Mycobacterium paratuberculosis).